The chain runs to 187 residues: UPF0301 protein YqgE (187 aa).

It belongs to the UPF0301 (AlgH) family.

In Shigella boydii serotype 4 (strain Sb227), this protein is UPF0301 protein YqgE.